Consider the following 259-residue polypeptide: Insulin-induced gene 1 protein (259 aa).

The Cytoplasmic portion of the chain corresponds to 1-66; the sequence is MPRLHDHVWS…ARPGSWHHDL (66 aa). The disordered stretch occupies residues 33–57; that stretch reads PQGPGAPEPEPAPRGQREGTAGFSA. Residues 67 to 89 form a helical membrane-spanning segment; that stretch reads VQRSLVLFSFGVVLALVLNLLQI. The Extracellular segment spans residues 90–108; the sequence is QRNVTLFPDEVIATIFSSA. The chain crosses the membrane as a helical span at residues 109-126; sequence WWVPPCCGTAAAVVGLLY. Over 127 to 141 the chain is Cytoplasmic; it reads PCIDSHLGEPHKFKR. Residues Lys138 and Lys140 each participate in a glycyl lysine isopeptide (Lys-Gly) (interchain with G-Cter in ubiquitin) cross-link. Residues 142–164 form a helical membrane-spanning segment; sequence EWASVMRCIAVFVGINHASAKLD. Topologically, residues 165-167 are extracellular; it reads FAN. The chain crosses the membrane as a helical span at residues 168–186; it reads NVQLSLTLAALSLGLWWTF. Residues 187–191 lie on the Cytoplasmic side of the membrane; it reads DRSRS. A Phosphoserine modification is found at Ser189. The helical transmembrane segment at 192-213 threads the bilayer; that stretch reads GLGLGITIAFLATLITQFLVYN. At 214 to 227 the chain is on the extracellular side; sequence GVYQYTSPDFLYIR. Residues 228-245 form a helical membrane-spanning segment; sequence SWLPCIFFSGGVTVGNIG. Residues 246–259 are Cytoplasmic-facing; it reads RQLAMGVPEKPHSD. The short motif at 253–259 is the KxHxx element; it reads PEKPHSD.

It belongs to the INSIG family. In terms of assembly, interacts with SCAP; interaction is direct and only takes place in the presence of sterols; it prevents interaction between SCAP and the coat protein complex II (COPII). Associates with the SCAP-SREBP complex (composed of SCAP and SREBF1/SREBP1 or SREBF2/SREBP2); association is mediated via its interaction with SCAP and only takes place in the presence of sterols. Interaction with SCAP is mutually exclusive with PAQR3. Interacts with HMGCR (via its SSD); the interaction, accelerated by sterols, leads to the recruitment of HMGCR to AMFR/gp78 for its ubiquitination by the sterol-mediated ERAD pathway. Interacts with AMFR/gp78 (via its membrane domain); the interaction recruits HMCR at the ER membrane for its ubiquitination and degradation by the sterol-mediated ERAD pathway. Interacts with SOAT2/ACAT2; leading to promote recruitment of AMFR/gp78 and subsequent ubiquitination of SOAT2/ACAT2. Interacts with RNF139. Interacts with RNF145. Post-translationally, phosphorylation at Ser-189 by PCK1 reduces binding to oxysterol, disrupting the interaction between INSIG1 and SCAP, thereby promoting nuclear translocation of SREBP proteins (SREBF1/SREBP1 or SREBF2/SREBP2) and subsequent transcription of downstream lipogenesis-related genes. Ubiquitinated by AMFR/gp78 in response to sterol deprivation, leading to its degradation: when the SCAP-SREBP complex becomes dissociated from INSIG1, INSIG1 is then ubiquitinated and degraded in proteasomes. Although ubiquitination is required for rapid INSIG1 degradation, it is not required for release of the SCAP-SREBP complex. Ubiquitinated by RNF139. In terms of tissue distribution, highly expressed in liver and kidney.

The protein resides in the endoplasmic reticulum membrane. Oxysterol-binding protein that mediates feedback control of cholesterol synthesis by controlling both endoplasmic reticulum to Golgi transport of SCAP and degradation of HMGCR. Acts as a negative regulator of cholesterol biosynthesis by mediating the retention of the SCAP-SREBP complex in the endoplasmic reticulum, thereby blocking the processing of sterol regulatory element-binding proteins (SREBPs) SREBF1/SREBP1 and SREBF2/SREBP2. Binds oxysterol, including 25-hydroxycholesterol, regulating interaction with SCAP and retention of the SCAP-SREBP complex in the endoplasmic reticulum. In presence of oxysterol, interacts with SCAP, retaining the SCAP-SREBP complex in the endoplasmic reticulum, thereby preventing SCAP from escorting SREBF1/SREBP1 and SREBF2/SREBP2 to the Golgi. Sterol deprivation or phosphorylation by PCK1 reduce oxysterol-binding, disrupting the interaction between INSIG1 and SCAP, thereby promoting Golgi transport of the SCAP-SREBP complex, followed by processing and nuclear translocation of SREBF1/SREBP1 and SREBF2/SREBP2. Also regulates cholesterol synthesis by regulating degradation of HMGCR: initiates the sterol-mediated ubiquitin-mediated endoplasmic reticulum-associated degradation (ERAD) of HMGCR via recruitment of the reductase to the ubiquitin ligases AMFR/gp78 and/or RNF139. Also regulates degradation of SOAT2/ACAT2 when the lipid levels are low: initiates the ubiquitin-mediated degradation of SOAT2/ACAT2 via recruitment of the ubiquitin ligases AMFR/gp78. This chain is Insulin-induced gene 1 protein, found in Rattus norvegicus (Rat).